The sequence spans 89 residues: Small ribosomal subunit protein bS20 (89 aa).

The protein belongs to the bacterial ribosomal protein bS20 family.

In terms of biological role, binds directly to 16S ribosomal RNA. This chain is Small ribosomal subunit protein bS20, found in Helicobacter acinonychis (strain Sheeba).